Reading from the N-terminus, the 94-residue chain is Probable Fe(2+)-trafficking protein (94 aa).

It belongs to the Fe(2+)-trafficking protein family.

In terms of biological role, could be a mediator in iron transactions between iron acquisition and iron-requiring processes, such as synthesis and/or repair of Fe-S clusters in biosynthetic enzymes. In Haemophilus ducreyi (strain 35000HP / ATCC 700724), this protein is Probable Fe(2+)-trafficking protein.